A 55-amino-acid chain; its full sequence is Large ribosomal subunit protein bL33 (55 aa).

Belongs to the bacterial ribosomal protein bL33 family.

The protein is Large ribosomal subunit protein bL33 of Klebsiella pneumoniae (strain 342).